The primary structure comprises 146 residues: Large ribosomal subunit protein uL13 (146 aa).

The protein belongs to the universal ribosomal protein uL13 family. In terms of assembly, part of the 50S ribosomal subunit.

Functionally, this protein is one of the early assembly proteins of the 50S ribosomal subunit, although it is not seen to bind rRNA by itself. It is important during the early stages of 50S assembly. This Borreliella burgdorferi (strain ATCC 35210 / DSM 4680 / CIP 102532 / B31) (Borrelia burgdorferi) protein is Large ribosomal subunit protein uL13.